The primary structure comprises 252 residues: uncharacterized protein (252 aa).

In terms of domain architecture, Clp R spans 96-238; the sequence is FRRFTPRARN…ITTLASLTGA (143 aa). 2 repeat regions span residues 99–164 and 172–238; these read FTPR…PAVT and FSGP…LTGA.

Belongs to the ClpA/ClpB family. ClpC subfamily.

This is an uncharacterized protein from Mycobacterium bovis (strain ATCC BAA-935 / AF2122/97).